Consider the following 386-residue polypeptide: uncharacterized protein (386 aa).

Residues 355-386 (PSEAQKVQVKSNKKPPIAPKPEHLKKRDHGLC) are disordered. Residues 377-386 (HLKKRDHGLC) are compositionally biased toward basic residues.

This is an uncharacterized protein from Rickettsia prowazekii (strain Madrid E).